A 266-amino-acid polypeptide reads, in one-letter code: Norfluorocurarine synthase 1 (266 aa).

Positions 11 to 121 (HFVLVHGAGH…VMPDAVHPPS (111 aa)) constitute an AB hydrolase-1 domain. Catalysis depends on residues S86, D216, and H244.

Belongs to the AB hydrolase superfamily. As to quaternary structure, homodimer. As to expression, mainly expressed in roots.

The enzyme catalyses 17-dehydropreakuammicine + H2O = norfluorocurarine + methanol + CO2. It functions in the pathway alkaloid biosynthesis. Hydrolase involved in the biosynthesis of curare monoterpene indole alkaloids (MIAs), natural products such as strychnine, a neurotoxic compound used as a pesticide to control rodents, and its pharmacologically active derivatives, including brucine, used to regulate blood pressure. Curare alkaloids act as animal glycine receptor antagonists. Catalyzes the conversion of dehydropreakuammicine to norfluorocurarine. This chain is Norfluorocurarine synthase 1, found in Strychnos nux-vomica (Poison nut).